Consider the following 400-residue polypeptide: Enoyl-[acyl-carrier-protein] reductase [NADH] (400 aa).

NAD(+)-binding positions include 48 to 53 (GSSSGY), 74 to 75 (FE), 111 to 112 (DA), and 139 to 140 (LA). Tyr225 lines the substrate pocket. Tyr235 functions as the Proton donor in the catalytic mechanism. NAD(+) is bound by residues Lys244 and 273–275 (VVT).

The protein belongs to the TER reductase family. Monomer.

The enzyme catalyses a 2,3-saturated acyl-[ACP] + NAD(+) = a (2E)-enoyl-[ACP] + NADH + H(+). The protein operates within lipid metabolism; fatty acid biosynthesis. Its function is as follows. Involved in the final reduction of the elongation cycle of fatty acid synthesis (FAS II). Catalyzes the reduction of a carbon-carbon double bond in an enoyl moiety that is covalently linked to an acyl carrier protein (ACP). The polypeptide is Enoyl-[acyl-carrier-protein] reductase [NADH] (Shewanella oneidensis (strain ATCC 700550 / JCM 31522 / CIP 106686 / LMG 19005 / NCIMB 14063 / MR-1)).